The primary structure comprises 235 residues: Glycerol uptake facilitator protein 2 (235 aa).

6 consecutive transmembrane segments (helical) span residues 4–24 (FLGE…SGAA), 39–59 (FICL…GQFG), 62–82 (GHLN…PMAN), 83–103 (VWPY…IVII), 134–154 (VFNF…LLNL), and 165–185 (MVGL…GFAI). Positions 65-67 (NPA) match the NPA 1 motif. Residues 186-188 (NPA) carry the NPA 2 motif. Residues 210 to 230 (WGYAWVPMFGPLLGGILAAGL) traverse the membrane as a helical segment.

Belongs to the MIP/aquaporin (TC 1.A.8) family.

The protein resides in the cell membrane. In terms of biological role, transporter that facilitates the transmembrane diffusion of water, dihydroxyacetone, glycerol and H(2)O(2). Is not permeable to urea and D/L-lactic acid. The polypeptide is Glycerol uptake facilitator protein 2 (Lactiplantibacillus plantarum (strain ATCC BAA-793 / NCIMB 8826 / WCFS1) (Lactobacillus plantarum)).